The sequence spans 121 residues: Large ribosomal subunit protein uL18 (121 aa).

This sequence belongs to the universal ribosomal protein uL18 family. Part of the 50S ribosomal subunit; part of the 5S rRNA/L5/L18/L25 subcomplex. Contacts the 5S and 23S rRNAs.

Functionally, this is one of the proteins that bind and probably mediate the attachment of the 5S RNA into the large ribosomal subunit, where it forms part of the central protuberance. This chain is Large ribosomal subunit protein uL18, found in Ureaplasma urealyticum serovar 10 (strain ATCC 33699 / Western).